Reading from the N-terminus, the 392-residue chain is S-adenosylmethionine synthase (392 aa).

His-17 contacts ATP. Residue Asp-19 coordinates Mg(2+). Glu-45 lines the K(+) pocket. The L-methionine site is built by Glu-58 and Gln-102. The tract at residues 102–112 (QSADIAQGVDA) is flexible loop. ATP is bound by residues 169–171 (DAK), 235–236 (KF), Asp-244, 250–251 (RK), Ala-267, and Lys-271. Residue Asp-244 coordinates L-methionine. Position 275 (Lys-275) interacts with L-methionine.

It belongs to the AdoMet synthase family. Homotetramer; dimer of dimers. The cofactor is Mg(2+). K(+) serves as cofactor.

The protein resides in the cytoplasm. The enzyme catalyses L-methionine + ATP + H2O = S-adenosyl-L-methionine + phosphate + diphosphate. It participates in amino-acid biosynthesis; S-adenosyl-L-methionine biosynthesis; S-adenosyl-L-methionine from L-methionine: step 1/1. Its function is as follows. Catalyzes the formation of S-adenosylmethionine (AdoMet) from methionine and ATP. The overall synthetic reaction is composed of two sequential steps, AdoMet formation and the subsequent tripolyphosphate hydrolysis which occurs prior to release of AdoMet from the enzyme. This is S-adenosylmethionine synthase from Methylobacterium radiotolerans (strain ATCC 27329 / DSM 1819 / JCM 2831 / NBRC 15690 / NCIMB 10815 / 0-1).